We begin with the raw amino-acid sequence, 213 residues long: Imidazole glycerol phosphate synthase subunit HisH (213 aa).

Residues 6–213 enclose the Glutamine amidotransferase type-1 domain; it reads LVTVIDYGMG…FKNFLNWNGQ (208 aa). Cysteine 86 acts as the Nucleophile in catalysis. Active-site residues include histidine 192 and glutamate 194.

In terms of assembly, heterodimer of HisH and HisF.

The protein localises to the cytoplasm. It catalyses the reaction 5-[(5-phospho-1-deoxy-D-ribulos-1-ylimino)methylamino]-1-(5-phospho-beta-D-ribosyl)imidazole-4-carboxamide + L-glutamine = D-erythro-1-(imidazol-4-yl)glycerol 3-phosphate + 5-amino-1-(5-phospho-beta-D-ribosyl)imidazole-4-carboxamide + L-glutamate + H(+). It carries out the reaction L-glutamine + H2O = L-glutamate + NH4(+). It participates in amino-acid biosynthesis; L-histidine biosynthesis; L-histidine from 5-phospho-alpha-D-ribose 1-diphosphate: step 5/9. Functionally, IGPS catalyzes the conversion of PRFAR and glutamine to IGP, AICAR and glutamate. The HisH subunit catalyzes the hydrolysis of glutamine to glutamate and ammonia as part of the synthesis of IGP and AICAR. The resulting ammonia molecule is channeled to the active site of HisF. This Hydrogenovibrio crunogenus (strain DSM 25203 / XCL-2) (Thiomicrospira crunogena) protein is Imidazole glycerol phosphate synthase subunit HisH.